A 624-amino-acid chain; its full sequence is Polycomb group protein EMF2A (624 aa).

Residues 338–359 (CPFCLVRCGNFKGLECHMTSSH) form a C2H2-type zinc finger. The disordered stretch occupies residues 420 to 445 (DAHIMESGSPEETQAESEDDVQEENE). Acidic residues predominate over residues 432-445 (TQAESEDDVQEENE). Positions 474 to 609 (LSANRADPRN…SARTMDTCNR (136 aa)) are VEFS-box.

It belongs to the VEFS (VRN2-EMF2-FIS2-SU(Z)12) family. Component of the polycomb repressive complex 2 (PRC2), which methylates 'Lys-27' residues of histone H3 (H3K27me3), leading to transcriptional repression of the affected target gene. In terms of tissue distribution, widely expressed. Highly expressed in shoot apical meristem and inflorescence meristem. Expressed in roots, leaves and immature seeds.

Its function is as follows. Polycomb group (PcG) protein. PcG proteins act by forming multiprotein complexes, which are required to maintain the transcriptionally repressive state of homeotic genes throughout development. PcG proteins are not required to initiate repression, but to maintain it during later stages of development. They act via the methylation of histones, rendering chromatin heritably changed in its expressibility. The polypeptide is Polycomb group protein EMF2A (Oryza sativa subsp. japonica (Rice)).